We begin with the raw amino-acid sequence, 233 residues long: Aquaglyceroporin AqpS (233 aa).

Transmembrane regions (helical) follow at residues 11 to 31 (VAEA…GIMA) and 40 to 60 (LALV…VTIL). Positions 69-71 (NPA) match the NPA 1 motif. 3 helical membrane-spanning segments follow: residues 89 to 109 (AYVI…HLMF), 125 to 145 (AQWL…LAGI), and 152 to 172 (VPWL…STSF). The NPA 2 signature appears at 174–176 (NPA). A helical transmembrane segment spans residues 193 to 213 (GDLPGFVIAELLGAVCALALM).

Belongs to the MIP/aquaporin (TC 1.A.8) family. NIP (TC 1.A.8.12) subfamily.

It is found in the cell inner membrane. In terms of biological role, involved in resistance to arsenic. Facilitates efflux of arsenite [As(III)]. Arsenate [As(V)] enters the cell through phosphate transport systems and is reduced to arsenite by the arsenate reductase ArsC. Internally generated arsenite flows out of the cell by downhill movement through AqpS. Can also transport the highly toxic methylarsenite [MAs(III)] and the relatively non-toxic methylarsenate [MAs(V)]. May be a component of an methylarsenite resistance pathway in which methylarsenite enters cells via AqpS, is oxidized by ArsH to methylarsenate, which exits the cells via AqpS. This pathway may confer a selective advantage for R.melliloti to grow in the presence of environmental methylarsenicals. This chain is Aquaglyceroporin AqpS, found in Rhizobium meliloti (strain 1021) (Ensifer meliloti).